A 285-amino-acid chain; its full sequence is tRNA uridine(34) hydroxylase (285 aa).

In terms of domain architecture, Rhodanese spans 130 to 225 (RGDDVVFFDG…YGEAFGDTGL (96 aa)). Cys-185 acts as the Cysteine persulfide intermediate in catalysis.

The protein belongs to the TrhO family.

It carries out the reaction uridine(34) in tRNA + AH2 + O2 = 5-hydroxyuridine(34) in tRNA + A + H2O. Catalyzes oxygen-dependent 5-hydroxyuridine (ho5U) modification at position 34 in tRNAs. This chain is tRNA uridine(34) hydroxylase, found in Rhodococcus jostii (strain RHA1).